A 209-amino-acid chain; its full sequence is Uracil phosphoribosyltransferase (209 aa).

Residues arginine 79, arginine 104, and 131–139 contribute to the 5-phospho-alpha-D-ribose 1-diphosphate site; that span reads DPMLATGGS. Residues isoleucine 194 and 199–201 contribute to the uracil site; that span reads GDA. Position 200 (aspartate 200) interacts with 5-phospho-alpha-D-ribose 1-diphosphate.

Belongs to the UPRTase family. It depends on Mg(2+) as a cofactor.

The catalysed reaction is UMP + diphosphate = 5-phospho-alpha-D-ribose 1-diphosphate + uracil. It participates in pyrimidine metabolism; UMP biosynthesis via salvage pathway; UMP from uracil: step 1/1. With respect to regulation, allosterically activated by GTP. Functionally, catalyzes the conversion of uracil and 5-phospho-alpha-D-ribose 1-diphosphate (PRPP) to UMP and diphosphate. This Geobacillus kaustophilus (strain HTA426) protein is Uracil phosphoribosyltransferase.